Reading from the N-terminus, the 112-residue chain is Signal recognition particle 19 kDa protein (112 aa).

This sequence belongs to the SRP19 family. In terms of assembly, part of the signal recognition particle protein translocation system, which is composed of SRP and FtsY. Archaeal SRP consists of a 7S RNA molecule of 300 nucleotides and two protein subunits: SRP54 and SRP19.

It is found in the cytoplasm. Functionally, involved in targeting and insertion of nascent membrane proteins into the cytoplasmic membrane. Binds directly to 7S RNA and mediates binding of the 54 kDa subunit of the SRP. This Aeropyrum pernix (strain ATCC 700893 / DSM 11879 / JCM 9820 / NBRC 100138 / K1) protein is Signal recognition particle 19 kDa protein.